A 380-amino-acid chain; its full sequence is Lipid-A-disaccharide synthase (380 aa).

This sequence belongs to the LpxB family.

It catalyses the reaction a lipid X + a UDP-2-N,3-O-bis[(3R)-3-hydroxyacyl]-alpha-D-glucosamine = a lipid A disaccharide + UDP + H(+). It participates in bacterial outer membrane biogenesis; LPS lipid A biosynthesis. Its function is as follows. Condensation of UDP-2,3-diacylglucosamine and 2,3-diacylglucosamine-1-phosphate to form lipid A disaccharide, a precursor of lipid A, a phosphorylated glycolipid that anchors the lipopolysaccharide to the outer membrane of the cell. In Pseudomonas syringae pv. syringae (strain B728a), this protein is Lipid-A-disaccharide synthase.